Here is a 308-residue protein sequence, read N- to C-terminus: HTH-type transcriptional activator AllS (308 aa).

An HTH lysR-type domain is found at 2–59 (FDPETLRTFIAVAETGSFSKAAERLCKTTATISYRIKLLEENTGVALFFRTTRSVTLT). Residues 19 to 38 (FSKAAERLCKTTATISYRIK) constitute a DNA-binding region (H-T-H motif).

This sequence belongs to the LysR transcriptional regulatory family.

In terms of biological role, positive regulator essential for the expression of allD operon. Binds to the allD promoter. This Escherichia coli O1:K1 / APEC protein is HTH-type transcriptional activator AllS (allS).